Reading from the N-terminus, the 827-residue chain is SID1 transmembrane family member 1 (827 aa).

Residues 1–19 (MLDCLRLALLCALPWLLRA) form the signal peptide. The Extracellular portion of the chain corresponds to 20-309 (AVPGHQEEPL…SIKESVYVKS (290 aa)). Residues Asn67, Asn83, Asn136, and Asn282 are each glycosylated (N-linked (GlcNAc...) asparagine). Residues 310–330 (SLFSIFVFLSFYLGCLLVVLV) form a helical membrane-spanning segment. Residues 331 to 442 (HHVRFQRKSI…DRRIVSKKYK (112 aa)) are Cytoplasmic-facing. The segment at 344–409 (FGSSDGSGNM…VEESDFDTMP (66 aa)) is disordered. The span at 375 to 386 (SSSSPGRQMSSS) shows a compositional bias: low complexity. The segment covering 398 to 409 (SSVEESDFDTMP) has biased composition (acidic residues). A helical transmembrane segment spans residues 443 to 463 (IYFWNIITIAVFYALPVMQLV). The Extracellular segment spans residues 464–494 (ITYQTVVNVTGNQDICYYNFLCAHPLGVLSA). The N-linked (GlcNAc...) asparagine glycan is linked to Asn471. A helical membrane pass occupies residues 495–515 (FNNILSNLGHVLLGFLFLLIV). Residues 516–541 (LRRDLLHRRALEAKDIFAMEYGIPKH) are Cytoplasmic-facing. The helical transmembrane segment at 542–562 (FGLFYAMGIALMMEGVLSACY) threads the bilayer. The Extracellular portion of the chain corresponds to 563–572 (HVCPNYSNFQ). N-linked (GlcNAc...) asparagine glycosylation is present at Asn567. Residues 573–590 (FDTSFMYMIAGLCMLKLY) traverse the membrane as a helical segment. At 591 to 600 (QTRHPDINAS) the chain is on the cytoplasmic side. The chain crosses the membrane as a helical span at residues 601-621 (AYSAYASFAVVITLTVLGVVF). The Extracellular portion of the chain corresponds to 622–626 (GKNDV). Residues 627-647 (WFWIIFSAIHILSSLALSTQI) form a helical membrane-spanning segment. Topologically, residues 648-683 (YYMGRFKIDLGIFRRAAMVFYTDCIQQCSRPLYMDR) are cytoplasmic. The chain crosses the membrane as a helical span at residues 684–704 (MVLLIVGNLVNWSFAFFGLIY). At 705–710 (RPRDFA) the chain is on the extracellular side. Residues 711–731 (SYMLGIFICNLLLYLAFYIIM) traverse the membrane as a helical segment. The Cytoplasmic segment spans residues 732-741 (KLRSSEKVLP). A helical transmembrane segment spans residues 742–762 (LPVFCIAATAVVWAAALYFFF). Residues 763 to 791 (QNLSSWEGTPAESREKNRECVLLDFFDDH) are Extracellular-facing. Residue Asn764 is glycosylated (N-linked (GlcNAc...) asparagine). Residues 792–812 (DIWHFLSATALFFSFLVLLTL) traverse the membrane as a helical segment. Residues 813–827 (DDDLDVVRRDQIPVF) are Cytoplasmic-facing.

Belongs to the SID1 family.

Its subcellular location is the membrane. In vitro binds long double-stranded RNA (dsRNA) (500 and 700 base pairs), but not dsRNA shorter than 300 bp. Not involved in RNA autophagy, a process in which RNA is directly imported into lysosomes in an ATP-dependent manner, and degraded. In Mus musculus (Mouse), this protein is SID1 transmembrane family member 1 (Sidt1).